We begin with the raw amino-acid sequence, 217 residues long: Non-structural protein NS3 (217 aa).

The protein belongs to the orbivirus NS3 family.

May play a role in the release of virions from infected cells. The chain is Non-structural protein NS3 (Segment-10) from Camelus dromedarius (Dromedary).